Consider the following 138-residue polypeptide: Augmin complex subunit msd1 (138 aa).

In terms of assembly, component of the augmin complex composed of dgt2, dgt3, dgt4, dgt5, dgt6, msd1, msd5 and wac. The complex interacts directly or indirectly with microtubules and is required for centrosome-independent generation of spindle microtubules.

It is found in the cytoplasm. The protein localises to the cytoskeleton. It localises to the spindle. Functionally, as part of the augmin complex, plays a role in centrosome-independent generation of spindle microtubules. The complex is required for mitotic spindle assembly through its involvement in localizing gamma-tubulin to spindle microtubules. msd1 is required for microtubule nucleation from within the mitotic spindle and for localization of Grip71 to centrosomes and mitotic spindle. This chain is Augmin complex subunit msd1, found in Drosophila melanogaster (Fruit fly).